The following is a 664-amino-acid chain: RBBP8 N-terminal-like protein (664 aa).

Positions 125–140 (LRGLGDRPKPRAKEGT) are enriched in basic and acidic residues. Disordered regions lie at residues 125–284 (LRGL…KLSP) and 369–664 (RAGS…WEET). Pro residues predominate over residues 241-255 (GTPPPLPARSSPPSP). Residues 437 to 454 (ALDKPLDLSEWGRARGQD) show a composition bias toward basic and acidic residues. A compositionally biased stretch (polar residues) spans 481–496 (SGPLTRSPQALSNGTK). The span at 516–528 (LPGSQLSLSSPGS) shows a compositional bias: low complexity. The span at 537–552 (PLPPPHPQPPPHPQPP) shows a compositional bias: pro residues. Residues 554–570 (LDGHPEPSKAEVLRPES) are compositionally biased toward basic and acidic residues. The span at 584–597 (GLSSQAEATTSTTG) shows a compositional bias: polar residues. Positions 628–637 (KKPSRGRRKL) are enriched in basic residues. The segment covering 654–664 (PSPNSSPWEET) has biased composition (polar residues).

In Homo sapiens (Human), this protein is RBBP8 N-terminal-like protein (RBBP8NL).